We begin with the raw amino-acid sequence, 447 residues long: Phosphoglucosamine mutase (447 aa).

Ser-101 acts as the Phosphoserine intermediate in catalysis. Positions 101, 242, 244, and 246 each coordinate Mg(2+). Ser-101 is subject to Phosphoserine.

The protein belongs to the phosphohexose mutase family. Mg(2+) serves as cofactor. Post-translationally, activated by phosphorylation.

It carries out the reaction alpha-D-glucosamine 1-phosphate = D-glucosamine 6-phosphate. Catalyzes the conversion of glucosamine-6-phosphate to glucosamine-1-phosphate. In Azorhizobium caulinodans (strain ATCC 43989 / DSM 5975 / JCM 20966 / LMG 6465 / NBRC 14845 / NCIMB 13405 / ORS 571), this protein is Phosphoglucosamine mutase.